Reading from the N-terminus, the 274-residue chain is uncharacterized protein (274 aa).

The chain crosses the membrane as a helical span at residues I238–C258.

It is found in the membrane. This is an uncharacterized protein from Schizosaccharomyces pombe (strain 972 / ATCC 24843) (Fission yeast).